The following is a 256-amino-acid chain: Transmembrane protein 74B (256 aa).

The tract at residues 1–111 (MPPAQGYEFA…LSLHSEEGPA (111 aa)) is disordered. Over residues 80-96 (RLGSSPSPPGGVSSLPR) the composition is skewed to low complexity. The segment covering 97-108 (SQRDDLSLHSEE) has biased composition (basic and acidic residues). The next 2 helical transmembrane spans lie at 123–143 (FVSA…AYAI) and 177–197 (IIAG…LLMV).

Belongs to the TMEM74 family.

It is found in the membrane. This is Transmembrane protein 74B (TMEM74B) from Homo sapiens (Human).